A 208-amino-acid chain; its full sequence is High frequency lysogenization protein HflD homolog (208 aa).

This sequence belongs to the HflD family.

The protein resides in the cytoplasm. Its subcellular location is the cell inner membrane. This is High frequency lysogenization protein HflD homolog from Photorhabdus laumondii subsp. laumondii (strain DSM 15139 / CIP 105565 / TT01) (Photorhabdus luminescens subsp. laumondii).